The following is a 311-amino-acid chain: Methionyl-tRNA formyltransferase (311 aa).

112–115 is a binding site for (6S)-5,6,7,8-tetrahydrofolate; sequence SLLP.

It belongs to the Fmt family.

The catalysed reaction is L-methionyl-tRNA(fMet) + (6R)-10-formyltetrahydrofolate = N-formyl-L-methionyl-tRNA(fMet) + (6S)-5,6,7,8-tetrahydrofolate + H(+). Functionally, attaches a formyl group to the free amino group of methionyl-tRNA(fMet). The formyl group appears to play a dual role in the initiator identity of N-formylmethionyl-tRNA by promoting its recognition by IF2 and preventing the misappropriation of this tRNA by the elongation apparatus. The sequence is that of Methionyl-tRNA formyltransferase from Geobacter metallireducens (strain ATCC 53774 / DSM 7210 / GS-15).